The sequence spans 221 residues: Redox-sensing transcriptional repressor Rex (221 aa).

Residues 17–56 (IYYYYLSSLHEAGIKRINSTEISEAIKFDAATVRRDFSYF) constitute a DNA-binding region (H-T-H motif). Position 91–96 (91–96 (GTGNLG)) interacts with NAD(+).

It belongs to the transcriptional regulatory Rex family. Homodimer.

The protein resides in the cytoplasm. Modulates transcription in response to changes in cellular NADH/NAD(+) redox state. This chain is Redox-sensing transcriptional repressor Rex, found in Oenococcus oeni (strain ATCC BAA-331 / PSU-1).